The following is a 768-amino-acid chain: Phosphoribosylformylglycinamidine synthase subunit PurL (768 aa).

The active site involves histidine 44. Residues tyrosine 47 and lysine 86 each coordinate ATP. Residue glutamate 88 coordinates Mg(2+). Residues 89–92 (SHNH) and arginine 111 each bind substrate. The active-site Proton acceptor is the histidine 90. Aspartate 112 is a binding site for Mg(2+). A substrate-binding site is contributed by glutamine 235. Aspartate 263 contacts Mg(2+). 307–309 (ESQ) lines the substrate pocket. ATP-binding residues include aspartate 518 and glycine 555. Residue asparagine 556 coordinates Mg(2+). Serine 558 lines the substrate pocket.

This sequence belongs to the FGAMS family. Monomer. Part of the FGAM synthase complex composed of 1 PurL, 1 PurQ and 2 PurS subunits.

It is found in the cytoplasm. The catalysed reaction is N(2)-formyl-N(1)-(5-phospho-beta-D-ribosyl)glycinamide + L-glutamine + ATP + H2O = 2-formamido-N(1)-(5-O-phospho-beta-D-ribosyl)acetamidine + L-glutamate + ADP + phosphate + H(+). It functions in the pathway purine metabolism; IMP biosynthesis via de novo pathway; 5-amino-1-(5-phospho-D-ribosyl)imidazole from N(2)-formyl-N(1)-(5-phospho-D-ribosyl)glycinamide: step 1/2. Functionally, part of the phosphoribosylformylglycinamidine synthase complex involved in the purines biosynthetic pathway. Catalyzes the ATP-dependent conversion of formylglycinamide ribonucleotide (FGAR) and glutamine to yield formylglycinamidine ribonucleotide (FGAM) and glutamate. The FGAM synthase complex is composed of three subunits. PurQ produces an ammonia molecule by converting glutamine to glutamate. PurL transfers the ammonia molecule to FGAR to form FGAM in an ATP-dependent manner. PurS interacts with PurQ and PurL and is thought to assist in the transfer of the ammonia molecule from PurQ to PurL. The chain is Phosphoribosylformylglycinamidine synthase subunit PurL from Synechococcus sp. (strain JA-2-3B'a(2-13)) (Cyanobacteria bacterium Yellowstone B-Prime).